The sequence spans 172 residues: Putative F-box protein At3g13825 (172 aa).

An F-box domain is found at 1–51; that stretch reads MTTLSNLSVDLVGEIFSRVPLISLSEVRCTCTTWNTLSWNILSENYVFGKA.

The chain is Putative F-box protein At3g13825 from Arabidopsis thaliana (Mouse-ear cress).